Consider the following 305-residue polypeptide: MTESDMSEQLRGDVDHPESGIDVVLVTGLSGAGRGTAAKVLEDLGWYVADNLPPELIARMVELGLAAGSRITQLAVVMDVRSRGFTGDLDWVRRDLATRNITPRVLFLEASDDILVRRYEQNRRSHPLQGDQTLAEGIARERALLAPVRASADLVIDTSKLSVHALRESVERAFGGEVVAETSATVESFGYKYGLPMDADIVMDVRFLPNPHWVDALRPHTGQHPDVRDYVLGQPGAEEFLDTYHRLLNVVIDGYRREGKRYMTVAIGCTGGKHRSVAIAEALAGRLQGGDELTVRVLHRDLGRE.

Residue 28 to 35 coordinates ATP; sequence GLSGAGRG. Residue 79-82 participates in GTP binding; the sequence is DVRS.

The protein belongs to the RapZ-like family.

Functionally, displays ATPase and GTPase activities. This is Nucleotide-binding protein Mjls_2437 from Mycobacterium sp. (strain JLS).